Consider the following 495-residue polypeptide: Hydroxyneurosporene desaturase (495 aa).

It belongs to the carotenoid/retinoid oxidoreductase family.

It catalyses the reaction rhodopin + A = (3E)-3,4-didehydrorhodopin + AH2. It participates in carotenoid biosynthesis; spheroidene biosynthesis. Its function is as follows. Catalyzes the introduction of C-3,4 double bonds into 1-hydroxyneurosporene (1-HO-Neu) to yield demethylspheroidene (DMS). It prefer the acyclic carotenoids such as 1-hydroxylycopene, and 1-hydroxy-gamma-carotene, whereas 1-hydroxy-3,4-didehydrolycopene and 1,1-dihydroxylycopene are much less effective. The chain is Hydroxyneurosporene desaturase (crtD) from Cereibacter sphaeroides (strain ATCC 17023 / DSM 158 / JCM 6121 / CCUG 31486 / LMG 2827 / NBRC 12203 / NCIMB 8253 / ATH 2.4.1.) (Rhodobacter sphaeroides).